A 199-amino-acid polypeptide reads, in one-letter code: Probable GTP-binding protein EngB (199 aa).

One can recognise an EngB-type G domain in the interval Asp28–Val199. GTP-binding positions include Gly36 to Ser43, Gly63 to Leu67, Asp81 to Gly84, Thr148 to Asp151, and Phe180 to Ser182. Mg(2+)-binding residues include Ser43 and Thr65.

Belongs to the TRAFAC class TrmE-Era-EngA-EngB-Septin-like GTPase superfamily. EngB GTPase family. The cofactor is Mg(2+).

Necessary for normal cell division and for the maintenance of normal septation. In Streptococcus pyogenes serotype M49 (strain NZ131), this protein is Probable GTP-binding protein EngB.